The sequence spans 162 residues: Caveolin-2 (162 aa).

At 1–86 the chain is on the cytoplasmic side; the sequence is MGLETEKADV…FEISKYVMYK (86 aa). Residue Tyr-19 is modified to Phosphotyrosine; by SRC. Residues Ser-20 and Ser-23 each carry the phosphoserine modification. Tyr-27 bears the Phosphotyrosine; by SRC mark. Ser-36 is subject to Phosphoserine. The helical intramembrane region spans 87–107; the sequence is FLTVFLAIPLAFIAGILFATL. Residues 108 to 162 lie on the Cytoplasmic side of the membrane; sequence SCLHIWILMPFVKTCLMVLPSVQTIWKSVTDVIIAPLCTSVGRSFSSVSLQLSQD.

This sequence belongs to the caveolin family. In terms of assembly, monomer or homodimer. Interacts with CAV1; the interaction forms a stable heterooligomeric complex that is required for targeting to lipid rafts and for caveolae formation. Tyrosine phosphorylated forms do not form heterooligomers with the Tyr-19-phosphorylated form existing as a monomer or dimer, and the Tyr-27-form as a monomer only. Interacts (tyrosine phosphorylated form) with the SH2 domain-containing proteins, RASA1, NCK1 and SRC. Interacts (tyrosine phosphorylated form) with INSR, the interaction (Tyr-27-phosphorylated form) is increased on insulin stimulation. Interacts (Tyr-19 phosphorylated form) with MAPK1 (phosphorylated form); the interaction, promoted by insulin, leads to nuclear location and MAPK1 activation. Interacts with STAT3; the interaction is increased on insulin-induced tyrosine phosphorylation leading to STAT activation. Phosphorylated on serine and tyrosine residues. CAV1 promotes phosphorylation on Ser-23 which then targets the complex to the plasma membrane, lipid rafts and caveolae. Phosphorylation on Ser-36 appears to modulate mitosis in endothelial cells. Phosphorylation on both Tyr-19 and Tyr-27 is required for insulin-induced 'Ser-727' phosphorylation of STAT3 and its activation. Phosphorylation on Tyr-19 is required for insulin-induced phosphorylation of MAPK1 and DNA binding of STAT3. Tyrosine phosphorylation is induced by both EGF and insulin (By. similarity).

It is found in the nucleus. It localises to the cytoplasm. The protein localises to the golgi apparatus membrane. Its subcellular location is the cell membrane. The protein resides in the membrane. It is found in the caveola. May act as a scaffolding protein within caveolar membranes. Interacts directly with G-protein alpha subunits and can functionally regulate their activity. Acts as an accessory protein in conjunction with CAV1 in targeting to lipid rafts and driving caveolae formation. The Ser-36 phosphorylated form has a role in modulating mitosis in endothelial cells. Positive regulator of cellular mitogenesis of the MAPK signaling pathway. Required for the insulin-stimulated nuclear translocation and activation of MAPK1 and STAT3, and the subsequent regulation of cell cycle progression. The polypeptide is Caveolin-2 (CAV2) (Pongo abelii (Sumatran orangutan)).